We begin with the raw amino-acid sequence, 292 residues long: 4-hydroxy-tetrahydrodipicolinate synthase (292 aa).

Threonine 45 contacts pyruvate. The active-site Proton donor/acceptor is tyrosine 133. Lysine 161 functions as the Schiff-base intermediate with substrate in the catalytic mechanism. Isoleucine 203 lines the pyruvate pocket.

The protein belongs to the DapA family. Homotetramer; dimer of dimers.

It is found in the cytoplasm. The enzyme catalyses L-aspartate 4-semialdehyde + pyruvate = (2S,4S)-4-hydroxy-2,3,4,5-tetrahydrodipicolinate + H2O + H(+). The protein operates within amino-acid biosynthesis; L-lysine biosynthesis via DAP pathway; (S)-tetrahydrodipicolinate from L-aspartate: step 3/4. In terms of biological role, catalyzes the condensation of (S)-aspartate-beta-semialdehyde [(S)-ASA] and pyruvate to 4-hydroxy-tetrahydrodipicolinate (HTPA). In Klebsiella pneumoniae subsp. pneumoniae (strain ATCC 700721 / MGH 78578), this protein is 4-hydroxy-tetrahydrodipicolinate synthase.